Here is a 940-residue protein sequence, read N- to C-terminus: Valine--tRNA ligase (940 aa).

The 'HIGH' region motif lies at 47 to 57 (PNVTGILHMGH). The 'KMSKS' region signature appears at 564–568 (KLSKS). Residue lysine 567 participates in ATP binding. The stretch at 872–938 (PIEQITKEKN…LQSILDKLAS (67 aa)) forms a coiled coil.

Belongs to the class-I aminoacyl-tRNA synthetase family. ValS type 1 subfamily. As to quaternary structure, monomer.

The protein localises to the cytoplasm. The enzyme catalyses tRNA(Val) + L-valine + ATP = L-valyl-tRNA(Val) + AMP + diphosphate. Catalyzes the attachment of valine to tRNA(Val). As ValRS can inadvertently accommodate and process structurally similar amino acids such as threonine, to avoid such errors, it has a 'posttransfer' editing activity that hydrolyzes mischarged Thr-tRNA(Val) in a tRNA-dependent manner. In Chlamydia felis (strain Fe/C-56) (Chlamydophila felis), this protein is Valine--tRNA ligase.